The following is an 82-amino-acid chain: Turripeptide Lol6.1 (82 aa).

Positions 1–23 (MRFHWIPTLTVLLVLSMSFGTEA) are cleaved as a signal peptide. Residues 24-48 (IPXXXXXXXXXXXXXXXXXXXXXXX) constitute a propeptide that is removed on maturation. Cystine bridges form between Cys-54–Cys-66, Cys-58–Cys-71, and Cys-65–Cys-77.

In terms of tissue distribution, expressed by the venom duct.

It is found in the secreted. In terms of biological role, acts as a neurotoxin by inhibiting an ion channel. This chain is Turripeptide Lol6.1, found in Iotyrris olangoensis (Sea snail).